Reading from the N-terminus, the 196-residue chain is Dephospho-CoA kinase (196 aa).

One can recognise a DPCK domain in the interval 5-196 (IIGLTGGIAT…QVDIALNFEL (192 aa)). 13 to 18 (ATGKTT) is an ATP binding site.

This sequence belongs to the CoaE family.

The protein resides in the cytoplasm. The catalysed reaction is 3'-dephospho-CoA + ATP = ADP + CoA + H(+). It participates in cofactor biosynthesis; coenzyme A biosynthesis; CoA from (R)-pantothenate: step 5/5. Catalyzes the phosphorylation of the 3'-hydroxyl group of dephosphocoenzyme A to form coenzyme A. This Nostoc sp. (strain PCC 7120 / SAG 25.82 / UTEX 2576) protein is Dephospho-CoA kinase.